Reading from the N-terminus, the 225-residue chain is UPF0758 protein Mhun_2739 (225 aa).

The region spanning 102-225 is the MPN domain; that stretch reads RITEPDHILK…VTSLRSLGYL (124 aa). Zn(2+) is bound by residues His-174, His-176, and Asp-187. A JAMM motif motif is present at residues 174 to 187; that stretch reads HNHPSGNPEPSSED.

It belongs to the UPF0758 family.

The protein is UPF0758 protein Mhun_2739 of Methanospirillum hungatei JF-1 (strain ATCC 27890 / DSM 864 / NBRC 100397 / JF-1).